Reading from the N-terminus, the 448-residue chain is Protease Do-like 8, chloroplastic (448 aa).

The tract at residues 152–333 is serine protease; sequence EGNGSGVVWD…IPSSTVLKIV (182 aa). Catalysis depends on charge relay system residues histidine 171, aspartate 214, and serine 292. Residues 336–433 form the PDZ domain; that stretch reads LIQFSKVLRA…DKVTLKIKRG (98 aa).

This sequence belongs to the peptidase S1C family.

It localises to the plastid. Its subcellular location is the chloroplast thylakoid lumen. Functionally, probable serine protease. This is Protease Do-like 8, chloroplastic (DEGP8) from Arabidopsis thaliana (Mouse-ear cress).